Here is a 309-residue protein sequence, read N- to C-terminus: UDP-N-acetylenolpyruvoylglucosamine reductase (309 aa).

The FAD-binding PCMH-type domain occupies 25–188 (RVGGPADWLF…TSVTLQGNRE (164 aa)). The active site involves Arg-168. The disordered stretch occupies residues 202–231 (AKRDATQPTKALTAGSTFRNPAGFSSTGQA). Positions 207–231 (TQPTKALTAGSTFRNPAGFSSTGQA) are enriched in polar residues. Ser-217 (proton donor) is an active-site residue. Residue Glu-299 is part of the active site.

It belongs to the MurB family. FAD is required as a cofactor.

It localises to the cytoplasm. The catalysed reaction is UDP-N-acetyl-alpha-D-muramate + NADP(+) = UDP-N-acetyl-3-O-(1-carboxyvinyl)-alpha-D-glucosamine + NADPH + H(+). It participates in cell wall biogenesis; peptidoglycan biosynthesis. Functionally, cell wall formation. The chain is UDP-N-acetylenolpyruvoylglucosamine reductase from Jannaschia sp. (strain CCS1).